The sequence spans 5146 residues: MLLPALLFGAAWALANGRWCEQTETVLVEEEVTPHQEDLVPCASLQHYQRRGWRLDLTWSGRAGLCAIYKPPETRPAAWNRTVRACCPGWGGTHCTLALAEASPEGHCFATWLCNLGAGSVNASAGSLEECCAQPWGHSWRDGRSQTCHSCSNHSRLGSTPSPAILQPLAGAVAQLWSQRQRPSATCATWSGFHYRTFDGRHFHFLGRCTYLLAGAADATWAVHLQPMGHCPQPGHCQLARVMMGPEEVLIRGENVTVNGRLVPEGASQLLPGLSLQWQGDWLVLSGGLGVVVRLDRSSSVSISVDQELQGQTQGLCGVYNGQPEDDFLEPGRGLAALAATFGNSWRLPDSELGCLDAVEAAQGCEDPLRGTETGTEAGQLRAEAQDVCHQLLEGPFRECHTQVPPAEYHEACLFAYCAGAPAGSGRAERLEAVCATLASYAQDCAARRIAVRWRKPGFCERLCPGGQLYSDCASACPPSCSAVGEGSEWSCGEECVSGCECPPGLFWDGALCVPAARCPCYRRRRRYEPGDTVRQLCNPCECRDGRWLCAQAPCAAECAVGGDGHYVTFDGRSFSFRGRAGCRFILVQDFAKRQLLIVLEHGDCDAGSCLHAISVSLGDTLVQLRDSGVVLVDGQDVALPWSAAGGLSVSRASSSFLLLRWPGARILWGVSDPAAYITLDPHHAHQVQGLCGTFTRNQQDDFLTPAGDVETSITAFASKFQVAGGGTCSLEACTPLSPCSTHTERQVFAEVACAILHGPTFQECHGLVDREAFHLRCLAAVCGCTPGRDCLCPVLAAYARRCAQEGALPSWRNQTFCPVLCPGGQEYQECAPACDRNCGEPEDCGELDNCVAGCNCPLGLLWDPEGQCVPPNLCPCQLGAHRYAPGSATMKDCNHCVCQERGLWNCTAHHCAPPRTFCPRELVYVPGACLLTCDSLDADRTCPPGSPGGCVCPPGTVLLEERCVPPELCPCRHGGQWYLPNAAIQEDCNLCVCQGQQWHCTGQRCDGRCRASGAPHYVTFDGLALTFPGACEYLLVREASGQFMVSAQNLPCGASGLTCTKALTVRLQGTVVHMLRGRAVMVNGVSVTPPKVYSGPGLSLHTAGLFLLLSTRLGLTLLWDGGTRVPVQLSPQLRGRVAGLCGDFDGDASNDLRSRQGVLEPTAELAAHSWRLGPLCPEPGDLPHPCAVNAHRAGWARARCGVVLQPLFARCHVEVPPQQHYEQCVYDACGCDSGGDCECLCSAIATYADECARHGIHVRWRSQELCPLQCERGQVYEACGPTCPATCHDHRPEPGWPCRAVACVEGCFCPEGTLLHGGVCLEPAACPCEWGGSFFPPGTVLQKDCGNNCTCRESQWLCGDDGGRCVEPGPGCAEGETPCRESGHCVPHGWLCDNQDDCGDGSDEEGCATRVCGEGQVSCCSGRCLPLVLLCDGQDDCGDGMDEQGCPCPQDSLTCADGHCLPPARLCDGHPDCPDGADEESCLGQVDCAPGEVSCVDGTCLGAIQLCDGVWDCLDGGDEGPGHCPLPSLPTPPAGTLPGPSAVSWKLHLPPWPVSALRLPCGPLDFACGSGECAPRGWRCDGEEDCADGSDESGCDRPCAPHHAPCARGSHCVAAEQLCDGVPHCPDGSDEDPGACERLQAPGGPNRTGLPCPEYSCPDGLCIGFQQVCDGQPDCELAGTAGPSPEEQGCGAWGPWSPWELCSRTCGPGVQGWSRRCSPPSLPVLWHCPGPERQTRACFAAACPEDGVWTSWSRWSPCSEPCGGVTARHRECHPPQNGGRTCATLPGGPPSTRETRPCPQDGCPNVTCSGELVFHACVPCPLTCDDISGQATCPPDRPCGGPGCWCPAGQVLGAQGRCVWPRQCPCLVDGSRYWPGQRVKTDCQLCVCQDGRPRRCQPSLDCAVNCGWSAWSPWAECLGPCGSRSVQWSFRSPNNPRPAGRGHQCRGLHRKARRCQTEPCEGCEQDGRVHRVGERWRAGPCRVCQCLHDGSARCSPYCPLGSCPQDWVLVEGVGESCCHCVPPGENQTVHPMATPVPAPTPSPQIGAPLITYLLPPPGDPCYSPLGLARLPEGSLPASSQQLEHPAWAAILRPAPGAPGWSPVEHADTQGHTPPPYLQLDLLQPRNLTGIIVQGAGSSDWLQVSSDGLHWHSYRDIQHGTQPAPQLFPKNWNGPSTVWMFARMVQARHVRVWPSDGHHQAAPSSDANLDGPLRVELLGCEPAPLCLGVGHRCVSGECAPRGAPCDGVEDCKDGSDEEGCVTPPAGAGRIESTAWSSAPSSAQPGQLPPQPSEGLAEAEADHWHPGRGSPVPPTGKGPASLGSEPHPSPGGSVQTVTPTSQPEAQALRPEMAAVTVLPPHPMVTPEVPAGRSTTPGPFPHVQCSPGQVPCEVLGCVELEQLCDGREDCLDGSDERPCAWAAGTVPFTVPTTTLPGLPASRDLCSPSQLTCGSGECLPVERRCDLQLDCQDGSDENGCVDCGLAPWSGWSSCSRSCGLGLAFQRRELLRPPLPGGSCPPDRLRSQPCFVQACPVAGAWAEWEAWGPCSVSCGGGHRSRRRSCMDPPPKNGGAPCPGPPQERAPCGLQPCAGGTDCGQGRVHVSAELCRKGLVPPCPPSCLDPEANRSCSGLCLEGCRCPPGLLLQDAGCLPLSECPCLVGEELQQPGVPFLLDNCSRCVCEKGALLCEPGGCPVPCGWSAWSSWGPCDRSCGSGLRARFRSPSNPPAASGGAPCEGQRQELQACYSACGAEVPGWTPWAPWSACSQSCLVPGGGPALRSRSRLCPGPGDTSCIGEATEEEPCSPPVCLGLGVWGQWAAWSACSAPCNGGVQTRGRRCSASAPGDPGCQGPHSQTRDCNTQPCTAQCPGDMVFRSAEQCRWEGGPCPGLCLARGPGVECTGVCTAGCACPTGLFLHNSSCLPPSQCPCQLRGQLYAPGAVARLDSCSNCTCISGEMVCASEPCPVACGWSPWTPWSLCSRSCNVGVRRRFRAGTAPPAAFGGAACQGPNMEAEFCSLRPCGGPAGEWGPWSPCSVPCGGGYRNRTRGSSGPSPVDFSTCGLQPCAGPAPGVCPPGKRWLDCAQGPASCAELSAPRGADQPCHPGCYCPSGMLLLNNACVPTQDCPCTHGGRLHPPGSAVLRPCENCSCVSGLITNCTSWPCKEGQPTWSPWTPWSECSASCGPARRHKHRFCTRPPGGAPSSMAPPLLLSSVPPLCPGPEAEEEPCLLPECDRAGGWGPWGPWSSCSRSCGGGLRSRSRACDQPPPQGLGDYCEGPRAQGAACQALPCPVTNCTAIEGAEYSACGPPCPRSCDDLVHCVWHCQPGCYCPPGQVLSADGTVHVQPGHCSCLDLLTGERHRPGAQLAKPDGCNYCTCSEGQLTCTDLPCPVPGAWCPWSEWTACSQPCQGQTRTRSRACSCPAPQHGGAPCPGEAGEAGAQHQRETCASTPECPVDGAWSPWGPWSPCEVCLGRSHRSRECSWPPTSEGGRPCPGGHRQSRPCQGNSTQCTDCAGGQDLLPCGQPCPRSCEDLSPGVECQPDSMGCQQPRCGCPPGQLSQDGLCVTPSQCRCQYQPGAMGIPENQSRSAGSGLSSWESLEPGEVVTGPCDNCTCVAGILQCQEVPACSGLGLWGSWGPWEDCSVSCGGGEQLRFRRCPRPPCPGPARQSRTCRTQVCREAGCPAGRLYRECQPSEGCPFSCAHVTGQVGCFSAGCEEGCHCPEGTFLHRSACVQECPCVLTALWLQGLGAAGADPGAHLSVLGENGQPLGPGDELGSGQSLRTGCHNCSCAHGKLSCSVEACSKAAGGFSPWGPWGPCSRSCGGLGTRTRSRQCVRPMPAPGGQGCHGPHWDLEYCPSPECPGAAGSTAEPATGLPGGWGLWSPWSPCSGTCTDPAHPAWRSRSRLCLANCTGGAASQERPCNLPSCTELPLCPGPGCEAGNCSWTAWAPWEPCSRSCGVGQQRRLRAYHPPGPGGHWCPDVLTAYQERRFCNLRACPVPGGWSRWSPWSWCDRSCGGGRSLRSRSCSSPPPKNGGAPCVGERHHARLCNPTPCEEGCPAGMEVVSCANRCPRRCSDLQEGIVCQEDQACQQGCRCPEGSLEQDGGCVPLGHCECTDAQGHSWAPGSQHQEACNNCTCRAGQLSCTAQPCPPPAHCAWSRWSAWSPCSRSCGPAGQQSRFRSSTSGSWAPECREEQSQSQPCPQSPCPPLCLQGTRPRSLGDSWLQDGCQQCSCTPEGIICEDAECAGLGAWTPWSPWSDCPVSCGGGNQVRTRVCVASAPPRGGSPCLGPDVQSQRCGLWPCPALPDTCSWGPWGPCSRSCGPGLASRSASCPCLLAEAEPACNSTSPRLDTQACYAGPCLEECVWSSWSSWTRCSCEVLVQQRYRHQRPAPGGAGAGPPCTRLDGHFRPCLTGNCSEDSCAPPFEFQACGSPCTGLCATYLSPWLCQDLPPCQPGCYCPEGLLEQAGGCVPPEQCNCQHVSGEGAGVTLAPGDRLQLGCKECECQRGELQCTSQGCQGLLPLSGWSEWSPCGPCLPLGLLAPASRAALEERWPQDTAGLSPTSAPTLASEQHRHRLCLDPETGRPWAGDPDLCTVPLSQQRLCPDPGACQDLCQWGPWGAWSPCQVPCSGGFRLRWREAGIPPGGGCRGPWAQTESCNMGPCPGESCEAQDTVPTPDCANQCPRSCVDLWDRVECLQGPCRPGCRCPPGQLVQDGHCVPVSSCRCGLPSPNASWALAPAEVVRLDCRNCTCVNGSLACSSHECPTLGPWSAWSNCSAPCGGGTTKRHRSCKEGPGVTPCQAQDMEQQQDCNLQPCPECPPGQVLSACAVSCPRLCSHLQPGTPCMQEPCQLGCDCPRGQLLHNGTCVPPAECPCTQLSLPWGLTLTLEEQHRELPPGTLLTQNCTHCICQGGAFSCSLTDCQECPPGETWQQVAPGELGPCEQTCREPNATETQGNCSGRQAPGCVCQRGHFRSQEGPCVPVDLCECWHHGRPHPPGSEWQKACESCRCVSGESICTQHCPPLTCAQGETAVQEPGGCCPTCRQEAPEEQPVSCRHLTELRNLTKGACYLEQVEVNYCSGHCPSSTNVLPEEPYLQSQCDCCSYRLDPENPVRILNLRCPGGRTELVVLPVIHSCQCSACQGGDFSER.

Residues 1–17 (MLLPALLFGAAWALANG) form the signal peptide. Residues 18–94 (RWCEQTETVL…ACCPGWGGTH (77 aa)) enclose the EMI domain. N-linked (GlcNAc...) asparagine glycans are attached at residues Asn80, Asn122, and Asn153. One can recognise a VWFD 1 domain in the interval 185-356 (ATCATWSGFH…RLPDSELGCL (172 aa)). Intrachain disulfides connect Cys187-Cys317, Cys209-Cys355, and Cys231-Cys237. An N-linked (GlcNAc...) asparagine glycan is attached at Asn255. One can recognise a TIL 1 domain in the interval 464–519 (CPGGQLYSDCASACPPSCSAVGEGSEWSCGEECVSGCECPPGLFWDGALCVPAARC). Positions 557-730 (AECAVGGDGH…FQVAGGGTCS (174 aa)) constitute a VWFD 2 domain. Disulfide bonds link Cys559/Cys692 and Cys583/Cys729. N-linked (GlcNAc...) asparagine glycosylation occurs at Asn814. Positions 822–875 (CPGGQEYQECAPACDRNCGEPEDCGELDNCVAGCNCPLGLLWDPEGQCVPPNLC) constitute a TIL 2 domain. N-linked (GlcNAc...) asparagine glycosylation is present at Asn906. A VWFD 3 domain is found at 1008–1178 (GRCRASGAPH…HSWRLGPLCP (171 aa)). Disulfide bonds link Cys1010–Cys1142, Cys1032–Cys1177, and Cys1053–Cys1060. A TIL 3 domain is found at 1271–1327 (CERGQVYEACGPTCPATCHDHRPEPGWPCRAVACVEGCFCPEGTLLHGGVCLEPAAC). N-linked (GlcNAc...) asparagine glycosylation is present at Asn1349. 6 LDL-receptor class A domains span residues 1372-1409 (GCAE…EGCA), 1412-1447 (VCGE…EQGC), 1448-1484 (PCPQ…ESCL), 1488-1526 (DCAP…GHCP), 1561-1597 (PCGP…SGCD), and 1599-1638 (PCAP…GACE). Intrachain disulfides connect Cys1373-Cys1386, Cys1380-Cys1399, Cys1393-Cys1408, Cys1413-Cys1425, Cys1420-Cys1438, Cys1432-Cys1447, Cys1449-Cys1461, Cys1456-Cys1474, Cys1468-Cys1483, Cys1489-Cys1501, Cys1496-Cys1514, Cys1508-Cys1525, Cys1562-Cys1574, Cys1569-Cys1587, Cys1581-Cys1596, Cys1600-Cys1613, Cys1607-Cys1626, and Cys1620-Cys1637. Asn1647 is a glycosylation site (N-linked (GlcNAc...) asparagine). An LDL-receptor class A 7 domain is found at 1652-1690 (PCPEYSCPDGLCIGFQQVCDGQPDCELAGTAGPSPEEQG). TSP type-1 domains lie at 1691 to 1745 (CGAW…AACP) and 1747 to 1805 (DGVW…DGCP). 3 disulfide bridges follow: Cys1703-Cys1739, Cys1707-Cys1744, and Cys1718-Cys1729. Asn1806 carries an N-linked (GlcNAc...) asparagine glycan. The region spanning 1809 to 1865 (CSGELVFHACVPCPLTCDDISGQATCPPDRPCGGPGCWCPAGQVLGAQGRCVWPRQC) is the TIL 4 domain. EGF-like domains are found at residues 1821 to 1860 (CPLT…GRCV) and 1861 to 1898 (WPRQ…RRCQ). Positions 1906 to 1962 (NCGWSAWSPWAECLGPCGSRSVQWSFRSPNNPRPAGRGHQCRGLHRKARRCQTEPCE) constitute a TSP type-1 3 domain. Intrachain disulfides connect Cys1907-Cys1946, Cys1918-Cys1922, and Cys1956-Cys1961. One can recognise a VWFC 1 domain in the interval 1962–2022 (EGCEQDGRVH…GVGESCCHCV (61 aa)). Residues Asn2027 and Asn2127 are each glycosylated (N-linked (GlcNAc...) asparagine). 4 disulfides stabilise this stretch: Cys2062–Cys2220, Cys2226–Cys2238, Cys2233–Cys2251, and Cys2245–Cys2260. One can recognise an F5/8 type C domain in the interval 2062–2220 (CYSPLGLARL…GPLRVELLGC (159 aa)). Positions 2225 to 2261 (LCLGVGHRCVSGECAPRGAPCDGVEDCKDGSDEEGCV) constitute an LDL-receptor class A 8 domain. Positions 2262-2346 (TPPAGAGRIE…TPTSQPEAQA (85 aa)) are disordered. Composition is skewed to polar residues over residues 2273–2284 (TAWSSAPSSAQP) and 2331–2343 (GSVQ…SQPE). LDL-receptor class A domains lie at 2382–2418 (QCSP…RPCA) and 2442–2478 (LCSP…NGCV). Intrachain disulfides connect Cys2383-Cys2395, Cys2390-Cys2408, Cys2402-Cys2417, Cys2443-Cys2455, Cys2450-Cys2468, Cys2462-Cys2477, Cys2480-Cys2516, Cys2491-Cys2495, Cys2526-Cys2531, Cys2546-Cys2583, Cys2550-Cys2588, and Cys2561-Cys2573. TSP type-1 domains lie at 2479 to 2532 (DCGL…QACP) and 2534 to 2589 (AGAW…QPCA). The 44-residue stretch at 2611–2654 (VPPCPPSCLDPEANRSCSGLCLEGCRCPPGLLLQDAGCLPLSEC) folds into the TIL 5 domain. Asn2624 and Asn2673 each carry an N-linked (GlcNAc...) asparagine glycan. 3 consecutive TSP type-1 domains span residues 2694 to 2748 (PCGW…SACG), 2751 to 2807 (VPGW…PVCL), and 2809 to 2862 (LGVW…QPCT). 9 disulfides stabilise this stretch: Cys2695–Cys2733, Cys2706–Cys2710, Cys2743–Cys2747, Cys2763–Cys2801, Cys2767–Cys2806, Cys2783–Cys2791, Cys2821–Cys2856, Cys2825–Cys2861, and Cys2836–Cys2846. Asn2915 and Asn2946 each carry an N-linked (GlcNAc...) asparagine glycan. 2 TSP type-1 domains span residues 2964 to 3019 (ACGW…RPCG) and 3020 to 3071 (GPAG…GVCP). 3 disulfide bridges follow: Cys2965-Cys3003, Cys2976-Cys2980, and Cys3013-Cys3018. Asn3041 carries an N-linked (GlcNAc...) asparagine glycan. Residues 3070-3122 (CPPGKRWLDCAQGPASCAELSAPRGADQPCHPGCYCPSGMLLLNNACVPTQDC) form the TIL 6 domain. Residues Asn3143 and Asn3153 are each glycosylated (N-linked (GlcNAc...) asparagine). 2 consecutive TSP type-1 domains span residues 3163–3230 (QPTW…PECD) and 3232–3287 (AGGW…LPCP). 6 disulfide bridges follow: Cys3175–Cys3224, Cys3179–Cys3229, Cys3190–Cys3214, Cys3244–Cys3281, Cys3248–Cys3286, and Cys3259–Cys3271. A glycan (N-linked (GlcNAc...) asparagine) is linked at Asn3290. Positions 3295–3345 (EGAEYSACGPPCPRSCDDLVHCVWHCQPGCYCPPGQVLSADGTVHVQPGHC) constitute a TIL 7 domain. 2 consecutive TSP type-1 domains span residues 3388-3450 (PGAW…PECP) and 3452-3507 (DGAW…TQCT). 6 disulfides stabilise this stretch: Cys3400/Cys3443, Cys3404/Cys3449, Cys3415/Cys3427, Cys3464/Cys3499, Cys3467/Cys3506, and Cys3477/Cys3489. 3 N-linked (GlcNAc...) asparagine glycosylation sites follow: Asn3502, Asn3580, and Asn3607. Positions 3626–3674 (LGLWGSWGPWEDCSVSCGGGEQLRFRRCPRPPCPGPARQSRTCRTQVCR) constitute a TSP type-1 15 domain. Cystine bridges form between Cys3638–Cys3668, Cys3642–Cys3673, and Cys3653–Cys3658. Residue Asn3783 is glycosylated (N-linked (GlcNAc...) asparagine). TSP type-1 domains follow at residues 3802-3858 (AGGF…PECP), 3872-3924 (PGGW…PSCT), 3938-3994 (NCSW…RACP), and 3996-4051 (PGGW…TPCE). Disulfide bonds link Cys3814/Cys3852, Cys3818/Cys3857, and Cys3830/Cys3842. Residues Asn3906 and Asn3938 are each glycosylated (N-linked (GlcNAc...) asparagine). Intrachain disulfides connect Cys3939–Cys3975, Cys3950–Cys3954, Cys3988–Cys3993, Cys4008–Cys4045, Cys4012–Cys4050, and Cys4023–Cys4035. The region spanning 4054-4109 (CPAGMEVVSCANRCPRRCSDLQEGIVCQEDQACQQGCRCPEGSLEQDGGCVPLGHC) is the TIL 8 domain. The VWFC 2 domain occupies 4101-4168 (GGCVPLGHCE…AWSPCSRSCG (68 aa)). Residue Asn4131 is glycosylated (N-linked (GlcNAc...) asparagine). TSP type-1 domains are found at residues 4151 to 4204 (HCAW…SPCP), 4245 to 4300 (LGAW…WPCP), 4302 to 4358 (LPDT…GPCL), and 4360 to 4414 (ECVW…GNCS). 6 disulfides stabilise this stretch: Cys4152-Cys4188, Cys4163-Cys4167, Cys4198-Cys4203, Cys4257-Cys4294, Cys4261-Cys4299, and Cys4272-Cys4284. N-linked (GlcNAc...) asparagine glycosylation occurs at Asn4341. 3 cysteine pairs are disulfide-bonded: Cys4361/Cys4398, Cys4372/Cys4374, and Cys4408/Cys4413. Asn4412 carries N-linked (GlcNAc...) asparagine glycosylation. A TIL 9 domain is found at 4418–4473 (CAPPFEFQACGSPCTGLCATYLSPWLCQDLPPCQPGCYCPEGLLEQAGGCVPPEQC). In terms of domain architecture, TSP type-1 24 spans 4610 to 4661 (LCQWGPWGAWSPCQVPCSGGFRLRWREAGIPPGGGCRGPWAQTESCNMGPCP). 3 disulfides stabilise this stretch: Cys4611/Cys4645, Cys4622/Cys4626, and Cys4655/Cys4660. The TIL 10 domain occupies 4675 to 4721 (DCANQCPRSCVDLWDRVECLQGPCRPGCRCPPGQLVQDGHCVPVSSC). N-linked (GlcNAc...) asparagine glycosylation is found at Asn4729, Asn4746, Asn4751, and Asn4772. The region spanning 4761–4814 (CPTLGPWSAWSNCSAPCGGGTTKRHRSCKEGPGVTPCQAQDMEQQQDCNLQPCP) is the TSP type-1 25 domain. 3 disulfides stabilise this stretch: Cys4773/Cys4808, Cys4777/Cys4813, and Cys4788/Cys4797. The 55-residue stretch at 4816–4870 (CPPGQVLSACAVSCPRLCSHLQPGTPCMQEPCQLGCDCPRGQLLHNGTCVPPAEC) folds into the TIL 11 domain. Residues Asn4861, Asn4901, Asn4947, and Asn4954 are each glycosylated (N-linked (GlcNAc...) asparagine). In terms of domain architecture, VWFC 3 spans 4983–5041 (CECWHHGRPHPPGSEWQKACESCRCVSGESICTQHCPPLTCAQGETAVQEPGGCCPTCR). 4 disulfide bridges follow: Cys5052/Cys5100, Cys5066/Cys5117, Cys5076/Cys5133, and Cys5080/Cys5135. The 88-residue stretch at 5052-5139 (CRHLTELRNL…IHSCQCSACQ (88 aa)) folds into the CTCK domain. The N-linked (GlcNAc...) asparagine glycan is linked to Asn5060.

The protein belongs to the thrombospondin family. In terms of tissue distribution, subcommissural organ. Located at the boundary of the diencephalon and mesencephalon beneath the posterior commissure at the point where the axons cross the midline.

It localises to the secreted. The protein resides in the extracellular space. Involved in the modulation of neuronal aggregation. May be involved in developmental events during the formation of the central nervous system. The protein is SCO-spondin (SSPO) of Bos taurus (Bovine).